The chain runs to 457 residues: Neuropeptide receptor npr-1 (457 aa).

Residues 1–22 (MEVENFTDCQVYWKVYPDPSQS) are Extracellular-facing. A helical membrane pass occupies residues 23 to 43 (IYAIVPFLTVYLFLFFLGLFG). Topologically, residues 44–62 (NVTLIYVTCSHKALLSVQN) are cytoplasmic. Residues 63–83 (IFILNLAASDCMMCILSLPIT) form a helical membrane-spanning segment. Over 84–100 (PITNVYKNWYFGNLLCH) the chain is Extracellular. The cysteines at positions 99 and 178 are disulfide-linked. A helical membrane pass occupies residues 101–121 (LIPCIQGISIFVCTFSLGAIA). Residues 122-140 (LDRYILVVRPHSTPLSQRG) lie on the Cytoplasmic side of the membrane. The helical transmembrane segment at 141–161 (AFLTTVLLWILSFVVTLPYAF) threads the bilayer. The Extracellular portion of the chain corresponds to 162–193 (NMQMIEYTEERICGYFCTEKWESAKSRRAYTM). Residues 194–214 (IVMLAQFVVPFAVMAFCYANI) form a helical membrane-spanning segment. The Cytoplasmic segment spans residues 215-279 (VSVLSKRAQT…LQNRRTTSIL (65 aa)). The chain crosses the membrane as a helical span at residues 280 to 300 (VTMVVWFGITWLPHNVISLII). Residues 301–324 (EYDDTQSFFRLYGRDDYDISYLLN) are Extracellular-facing. Residues 325–345 (LFTHSIAMSNNVLNPVLYAWL) form a helical membrane-spanning segment. At 346-457 (NPSFRQLVIK…IEFSVNDTLV (112 aa)) the chain is on the cytoplasmic side.

Belongs to the G-protein coupled receptor 1 family. Expressed in neurons, including neurons in the head, the ventral nerve cord, and the preanal ganglion.

The protein resides in the membrane. G-protein coupled receptor for FARP(FMRFamide related peptide) neuropeptides. Activated by FARP neuropeptides flp-18 and flp-21. Plays a role in modulating social and feeding behavior. Required to modulate locomotion quiescence during the sleep-like state called lethargus, which occurs during molting between larval and adult stages, in part by regulating touch sensitivity. The polypeptide is Neuropeptide receptor npr-1 (Caenorhabditis elegans).